The chain runs to 822 residues: ATP-dependent zinc metalloprotease FtsH (822 aa).

Residues 1 to 76 (MEFNKLELLI…NQKEPGKARK (76 aa)) are Cytoplasmic-facing. Over residues 44 to 54 (SLDQPSDAPSN) the composition is skewed to polar residues. The tract at residues 44-71 (SLDQPSDAPSNNKKRNLDQPDNPNQKEP) is disordered. The helical transmembrane segment at 77-97 (IIWSFIIIILVLGVLALIILS) threads the bilayer. Residues 98-251 (GFSFSATSLN…QSMSLPTSYS (154 aa)) are Extracellular-facing. Residues 252–272 (FYTAASLVLSILPFILLIGII) traverse the membrane as a helical segment. At 273–822 (YYSMRKMGQA…SKESSSDKKK (550 aa)) the chain is on the cytoplasmic side. 347–354 (GPPGTGKT) is a binding site for ATP. Residue H569 coordinates Zn(2+). E570 is a catalytic residue. Positions 573 and 648 each coordinate Zn(2+). Over residues 758–794 (KKELEEKKKAEDLIRKAKKESEASSKEEKEMDVEKKV) the composition is skewed to basic and acidic residues. Residues 758 to 822 (KKELEEKKKA…SKESSSDKKK (65 aa)) are disordered. Over residues 796–805 (KPSASSTEPT) the composition is skewed to low complexity. Residues 812–822 (PSKESSSDKKK) show a composition bias toward basic and acidic residues.

In the central section; belongs to the AAA ATPase family. It in the C-terminal section; belongs to the peptidase M41 family. In terms of assembly, homohexamer. Zn(2+) serves as cofactor.

The protein resides in the cell membrane. Its function is as follows. Acts as a processive, ATP-dependent zinc metallopeptidase for both cytoplasmic and membrane proteins. Plays a role in the quality control of integral membrane proteins. The chain is ATP-dependent zinc metalloprotease FtsH from Malacoplasma penetrans (strain HF-2) (Mycoplasma penetrans).